We begin with the raw amino-acid sequence, 196 residues long: uncharacterized protein (196 aa).

The region spanning 1 to 183 (MREFHYGVHM…RFLFILSDLG (183 aa)) is the Macro domain.

This sequence belongs to the MacroD-type family.

This is an uncharacterized protein from Thermoplasma acidophilum (strain ATCC 25905 / DSM 1728 / JCM 9062 / NBRC 15155 / AMRC-C165).